Consider the following 124-residue polypeptide: Fluoride-specific ion channel FluC (124 aa).

4 helical membrane passes run Leu-5–Phe-25, Phe-32–Gly-52, Leu-61–Val-81, and Leu-94–Val-114. Residues Gly-69 and Thr-72 each coordinate Na(+).

The protein belongs to the fluoride channel Fluc/FEX (TC 1.A.43) family.

It localises to the cell inner membrane. It catalyses the reaction fluoride(in) = fluoride(out). With respect to regulation, na(+) is not transported, but it plays an essential structural role and its presence is essential for fluoride channel function. In terms of biological role, fluoride-specific ion channel. Important for reducing fluoride concentration in the cell, thus reducing its toxicity. In Haemophilus ducreyi (strain 35000HP / ATCC 700724), this protein is Fluoride-specific ion channel FluC.